The sequence spans 53 residues: UPF0391 membrane protein BURPS1106A_A2993 (53 aa).

The next 2 membrane-spanning stretches (helical) occupy residues 5-25 (ALIF…GIAA) and 30-50 (IAKI…VLGV).

The protein belongs to the UPF0391 family.

Its subcellular location is the cell membrane. In Burkholderia pseudomallei (strain 1106a), this protein is UPF0391 membrane protein BURPS1106A_A2993.